The following is a 423-amino-acid chain: MTQEVIKIRGGQTLKGDVTISGAKNSAVAIIPATLLAQGQVKLDGLPQISDVETLVSLLEDLNIKAHLNGKTLEVDTSEIENAPLPNNKVESLRASYYMMGAMLGRFKKCVIGLPGGCPLGPRPIDQHIKGFKALGAEIDESNDTSMKIEAKELHGANIFLDMVSVGATINIMLAAVHATGQTVIENAAKEPEVVDVANFLNSLGADIKGAGTSTLKINGVDSLHGSEYQIIPDRIEAGTYMCIAAAVGEEITINNIVPKHVEALTVKLKELGVDIQVDGDAEKAIIKRKSSYKNVDIKTLVYPGFATDLQQPITPLLFMADGPSFVTETIYPARFRHVDELKNMGANIEADMETGTATIKPSSLNGAEVYASDLRAGACLIIAGLLAEGVTTIYNVRHIYRGYTDIVKHLKELGANIWTEEV.

Phosphoenolpyruvate is bound at residue 24-25 (KN). Residue Arg94 participates in UDP-N-acetyl-alpha-D-glucosamine binding. The active-site Proton donor is Cys118. Cys118 bears the 2-(S-cysteinyl)pyruvic acid O-phosphothioketal mark. Residues 123-127 (RPIDQ), Asp309, and Ile331 each bind UDP-N-acetyl-alpha-D-glucosamine.

It belongs to the EPSP synthase family. MurA subfamily.

The protein resides in the cytoplasm. The catalysed reaction is phosphoenolpyruvate + UDP-N-acetyl-alpha-D-glucosamine = UDP-N-acetyl-3-O-(1-carboxyvinyl)-alpha-D-glucosamine + phosphate. It functions in the pathway cell wall biogenesis; peptidoglycan biosynthesis. Functionally, cell wall formation. Adds enolpyruvyl to UDP-N-acetylglucosamine. The sequence is that of UDP-N-acetylglucosamine 1-carboxyvinyltransferase 1 from Staphylococcus haemolyticus (strain JCSC1435).